The sequence spans 449 residues: Xylose isomerase (449 aa).

Catalysis depends on residues histidine 103 and aspartate 106. Glutamate 234, glutamate 270, histidine 273, aspartate 298, aspartate 309, aspartate 311, and aspartate 342 together coordinate Mg(2+).

This sequence belongs to the xylose isomerase family. As to quaternary structure, homotetramer. Mg(2+) serves as cofactor.

The protein localises to the cytoplasm. It catalyses the reaction alpha-D-xylose = alpha-D-xylulofuranose. Involved in D-xylose catabolism. The sequence is that of Xylose isomerase (xylA) from Lactiplantibacillus pentosus (Lactobacillus pentosus).